A 460-amino-acid polypeptide reads, in one-letter code: Interleukin-1 receptor-associated kinase 4 (460 aa).

The residue at position 1 (Met1) is an N-acetylmethionine. Residues 20-104 (RKLSDFIDPQ…APASLLLPDA (85 aa)) form the Death domain. Residue Lys34 is modified to N6-acetyllysine. Residues 186-454 (SVGGNKMGEG…PDIKKVQQLL (269 aa)) enclose the Protein kinase domain. ATP-binding positions include 192 to 200 (MGEGGFGVV) and Lys213. Asp311 acts as the Proton acceptor in catalysis. ATP-binding positions include 313–316 (KSAN) and Asp329. Residues Thr342 and Thr345 each carry the phosphothreonine modification. Ser346 carries the post-translational modification Phosphoserine.

Belongs to the protein kinase superfamily. TKL Ser/Thr protein kinase family. Pelle subfamily. Associates with MYD88 and IRAK2 to form a ternary complex called the Myddosome. Once phosphorylated, IRAK4 dissociates from the receptor complex and then associates with the TNF receptor-associated factor 6 (TRAF6), IRAK1, and PELI1; this intermediate complex is required for subsequent NF-kappa-B activation. Direct binding of SMAD6 to PELI1 prevents complex formation and hence negatively regulates IL1R-TLR signaling and eventually NF-kappa-B-mediated gene expression. Interacts with IL1RL1. Interacts (when phosphorylated) with IRAK1. May interact (when phosphorylated) with IRAK3. Mg(2+) is required as a cofactor. Post-translationally, phosphorylated.

It is found in the cytoplasm. It catalyses the reaction L-seryl-[protein] + ATP = O-phospho-L-seryl-[protein] + ADP + H(+). The catalysed reaction is L-threonyl-[protein] + ATP = O-phospho-L-threonyl-[protein] + ADP + H(+). Serine/threonine-protein kinase that plays a critical role in initiating innate immune response against foreign pathogens. Involved in Toll-like receptor (TLR) and IL-1R signaling pathways. Is rapidly recruited by MYD88 to the receptor-signaling complex upon TLR activation to form the Myddosome together with IRAK2. Phosphorylates initially IRAK1, thus stimulating the kinase activity and intensive autophosphorylation of IRAK1. Phosphorylates E3 ubiquitin ligases Pellino proteins (PELI1, PELI2 and PELI3) to promote pellino-mediated polyubiquitination of IRAK1. Then, the ubiquitin-binding domain of IKBKG/NEMO binds to polyubiquitinated IRAK1 bringing together the IRAK1-MAP3K7/TAK1-TRAF6 complex and the NEMO-IKKA-IKKB complex. In turn, MAP3K7/TAK1 activates IKKs (CHUK/IKKA and IKBKB/IKKB) leading to NF-kappa-B nuclear translocation and activation. Alternatively, phosphorylates TIRAP to promote its ubiquitination and subsequent degradation. Phosphorylates NCF1 and regulates NADPH oxidase activation after LPS stimulation suggesting a similar mechanism during microbial infections. This is Interleukin-1 receptor-associated kinase 4 (IRAK4) from Homo sapiens (Human).